A 262-amino-acid chain; its full sequence is Cytochrome c oxidase subunit 3 (262 aa).

7 helical membrane-spanning segments follow: residues 16–36 (PWPL…VQWF), 42–59 (TLFL…YQWW), 83–103 (GMIL…WAFF), 128–148 (FQIP…VTWA), 163–183 (SLFF…YEYI), 198–218 (FFVA…FLLI), and 240–260 (AWYW…IYWW).

It belongs to the cytochrome c oxidase subunit 3 family. Component of the cytochrome c oxidase (complex IV, CIV), a multisubunit enzyme composed of a catalytic core of 3 subunits and several supernumerary subunits. The complex exists as a monomer or a dimer and forms supercomplexes (SCs) in the inner mitochondrial membrane with ubiquinol-cytochrome c oxidoreductase (cytochrome b-c1 complex, complex III, CIII).

The protein localises to the mitochondrion inner membrane. It catalyses the reaction 4 Fe(II)-[cytochrome c] + O2 + 8 H(+)(in) = 4 Fe(III)-[cytochrome c] + 2 H2O + 4 H(+)(out). Its function is as follows. Component of the cytochrome c oxidase, the last enzyme in the mitochondrial electron transport chain which drives oxidative phosphorylation. The respiratory chain contains 3 multisubunit complexes succinate dehydrogenase (complex II, CII), ubiquinol-cytochrome c oxidoreductase (cytochrome b-c1 complex, complex III, CIII) and cytochrome c oxidase (complex IV, CIV), that cooperate to transfer electrons derived from NADH and succinate to molecular oxygen, creating an electrochemical gradient over the inner membrane that drives transmembrane transport and the ATP synthase. Cytochrome c oxidase is the component of the respiratory chain that catalyzes the reduction of oxygen to water. Electrons originating from reduced cytochrome c in the intermembrane space (IMS) are transferred via the dinuclear copper A center (CU(A)) of subunit 2 and heme A of subunit 1 to the active site in subunit 1, a binuclear center (BNC) formed by heme A3 and copper B (CU(B)). The BNC reduces molecular oxygen to 2 water molecules using 4 electrons from cytochrome c in the IMS and 4 protons from the mitochondrial matrix. In Aedes aegypti (Yellowfever mosquito), this protein is Cytochrome c oxidase subunit 3.